The sequence spans 172 residues: Endoribonuclease YbeY (172 aa).

Residues 1–21 (MTLHVGAEPAPREDDTEDALR) form a disordered region. Basic and acidic residues predominate over residues 10 to 21 (APREDDTEDALR). Histidine 134, histidine 138, and histidine 144 together coordinate Zn(2+).

Belongs to the endoribonuclease YbeY family. Zn(2+) is required as a cofactor.

Its subcellular location is the cytoplasm. Its function is as follows. Single strand-specific metallo-endoribonuclease involved in late-stage 70S ribosome quality control and in maturation of the 3' terminus of the 16S rRNA. This Burkholderia lata (strain ATCC 17760 / DSM 23089 / LMG 22485 / NCIMB 9086 / R18194 / 383) protein is Endoribonuclease YbeY.